We begin with the raw amino-acid sequence, 214 residues long: Thiamine-phosphate synthase (214 aa).

4-amino-2-methyl-5-(diphosphooxymethyl)pyrimidine contacts are provided by residues 38 to 42 (QLREK) and Asn-70. Mg(2+) contacts are provided by Asp-71 and Asp-90. Positions 109 and 138 each coordinate 4-amino-2-methyl-5-(diphosphooxymethyl)pyrimidine. Residue Gly-165 participates in 2-[(2R,5Z)-2-carboxy-4-methylthiazol-5(2H)-ylidene]ethyl phosphate binding.

It belongs to the thiamine-phosphate synthase family. The cofactor is Mg(2+).

The catalysed reaction is 2-[(2R,5Z)-2-carboxy-4-methylthiazol-5(2H)-ylidene]ethyl phosphate + 4-amino-2-methyl-5-(diphosphooxymethyl)pyrimidine + 2 H(+) = thiamine phosphate + CO2 + diphosphate. The enzyme catalyses 2-(2-carboxy-4-methylthiazol-5-yl)ethyl phosphate + 4-amino-2-methyl-5-(diphosphooxymethyl)pyrimidine + 2 H(+) = thiamine phosphate + CO2 + diphosphate. It carries out the reaction 4-methyl-5-(2-phosphooxyethyl)-thiazole + 4-amino-2-methyl-5-(diphosphooxymethyl)pyrimidine + H(+) = thiamine phosphate + diphosphate. The protein operates within cofactor biosynthesis; thiamine diphosphate biosynthesis; thiamine phosphate from 4-amino-2-methyl-5-diphosphomethylpyrimidine and 4-methyl-5-(2-phosphoethyl)-thiazole: step 1/1. In terms of biological role, condenses 4-methyl-5-(beta-hydroxyethyl)thiazole monophosphate (THZ-P) and 2-methyl-4-amino-5-hydroxymethyl pyrimidine pyrophosphate (HMP-PP) to form thiamine monophosphate (TMP). This chain is Thiamine-phosphate synthase, found in Caldanaerobacter subterraneus subsp. tengcongensis (strain DSM 15242 / JCM 11007 / NBRC 100824 / MB4) (Thermoanaerobacter tengcongensis).